Reading from the N-terminus, the 506-residue chain is MVSSTTPSSGEYLLEMSGINKSFPGVKALDNVNLKVRPHSIHALMGENGAGKSTLLKCLFGIYKKDSGTILFQGKEIDFHSAKEALENGISMVHQELNLVLQRSVMDNMWLGRYPTKGMFVDQDKMYRETKAIFDELDIDIDPRARVGTLSVSQMQMIEIAKAFSYNAKIVIMDEPTSSLTEKEVNHLFTIIRKLKERGCGIVYISHKMEEIFQLCDEVTVLRDGQWIATEPLAGLTMDKIIAMMVGRSLNQRFPDKENKPGEVILEVRNLTSLRQPSIRDVSFDLHKGEILGIAGLVGAKRTDIVETLFGIREKSAGTITLHGKKINNHNANEAINHGFALVTEERRSTGIYAYLDIGFNSLISNIRNYKNKVGLLDNSRMKSDTQWVIDSMRVKTPGHRTQIGSLSGGNQQKVIIGRWLLTQPEILMLDEPTRGIDVGAKFEIYQLIAELAKKGKGIIIISSEMPELLGITDRILVMSNGLVSGIVDTKTTTQNEILRLASLHL.

ABC transporter domains are found at residues 14-249 and 264-506; these read LEMS…VGRS and VILE…SLHL. Position 46–53 (46–53) interacts with ATP; the sequence is GENGAGKS.

The protein belongs to the ABC transporter superfamily. Galactose/methyl galactoside importer (TC 3.A.1.2.3) family. As to quaternary structure, the complex is composed of one ATP-binding protein (MglA), two transmembrane proteins (MglC) and a solute-binding protein (MglB).

The protein localises to the cell inner membrane. The catalysed reaction is D-galactose(out) + ATP + H2O = D-galactose(in) + ADP + phosphate + H(+). It carries out the reaction methyl beta-D-galactoside(out) + ATP + H2O = methyl beta-D-galactoside(in) + ADP + phosphate + H(+). In terms of biological role, part of the ABC transporter complex MglABC involved in galactose/methyl galactoside import. Responsible for energy coupling to the transport system. The protein is Galactose/methyl galactoside import ATP-binding protein MglA of Escherichia coli O157:H7.